The following is a 184-amino-acid chain: Tumor necrosis factor receptor superfamily member 13C (184 aa).

Residues 1–78 lie on the Extracellular side of the membrane; it reads MRRGPRSLRG…EAALPLPGLL (78 aa). The TNFR-Cys; truncated repeat unit spans residues 18–35; that stretch reads PCVPAECFDLLVRHCVAC. 2 disulfides stabilise this stretch: Cys19–Cys32 and Cys24–Cys35. Residues 26-31 form an essential for TNFSF13B/TALL1/BAFF/BLyS binding region; sequence DLLVRH. The disordered stretch occupies residues 43 to 62; the sequence is PKPAGASSPAPRTALQPQES. The chain crosses the membrane as a helical; Signal-anchor for type III membrane protein span at residues 79-99; sequence FGAPALLGLALVLALVLVGLV. Over 100 to 184 the chain is Cytoplasmic; sequence SWRRRQRRLR…TTKTAGPEQQ (85 aa). The interval 107–184 is disordered; sequence RLRGASSAEA…TTKTAGPEQQ (78 aa). The segment covering 118 to 128 has biased composition (basic and acidic residues); that stretch reads DGDKDAPEPLD. Positions 168 to 184 are enriched in polar residues; that stretch reads LGSTELVTTKTAGPEQQ.

Highly expressed in spleen and lymph node, and in resting B-cells. Detected at lower levels in activated B-cells, resting CD4+ T-cells, in thymus and peripheral blood leukocytes.

Its subcellular location is the membrane. Its function is as follows. B-cell receptor specific for TNFSF13B/TALL1/BAFF/BLyS. Promotes the survival of mature B-cells and the B-cell response. This is Tumor necrosis factor receptor superfamily member 13C (TNFRSF13C) from Homo sapiens (Human).